The primary structure comprises 324 residues: dITP/XTP pyrophosphatase (324 aa).

A unknown region spans residues 1 to 127; it reads MTKTIFESKT…KNDNNFGDTI (127 aa). Residues 128-324 form an NTP pyrophosphatase region; the sequence is LIATHNEGKT…EVFPKWQLEN (197 aa). 131–136 contributes to the substrate binding site; the sequence is THNEGK. Glutamate 164 and aspartate 193 together coordinate Mg(2+). Residue aspartate 193 is the Proton acceptor of the active site. Residues serine 194, 277 to 280, lysine 300, and 305 to 306 contribute to the substrate site; these read FGYD and HR.

The protein belongs to the HAM1 NTPase family. Homodimer. Mg(2+) is required as a cofactor.

The enzyme catalyses XTP + H2O = XMP + diphosphate + H(+). The catalysed reaction is dITP + H2O = dIMP + diphosphate + H(+). It catalyses the reaction ITP + H2O = IMP + diphosphate + H(+). Its function is as follows. Pyrophosphatase that catalyzes the hydrolysis of nucleoside triphosphates to their monophosphate derivatives, with a high preference for the non-canonical purine nucleotides XTP (xanthosine triphosphate), dITP (deoxyinosine triphosphate) and ITP. Seems to function as a house-cleaning enzyme that removes non-canonical purine nucleotides from the nucleotide pool, thus preventing their incorporation into DNA/RNA and avoiding chromosomal lesions. The polypeptide is dITP/XTP pyrophosphatase (Streptococcus agalactiae serotype III (strain NEM316)).